The sequence spans 764 residues: 5-methyltetrahydropteroyltriglutamate--homocysteine methyltransferase (764 aa).

Residues 16–19 and Lys-115 each bind 5-methyltetrahydropteroyltri-L-glutamate; that span reads RELK. Residues 435–437 and Glu-488 each bind L-homocysteine; that span reads IGS. L-methionine-binding positions include 435–437 and Glu-488; that span reads IGS. 5-methyltetrahydropteroyltri-L-glutamate-binding positions include 519 to 520 and Trp-565; that span reads RC. Asp-603 contributes to the L-homocysteine binding site. Asp-603 lines the L-methionine pocket. Glu-609 is a 5-methyltetrahydropteroyltri-L-glutamate binding site. Positions 645, 647, and 669 each coordinate Zn(2+). Catalysis depends on His-698, which acts as the Proton donor. Cys-730 contacts Zn(2+).

Belongs to the vitamin-B12 independent methionine synthase family. It depends on Zn(2+) as a cofactor.

It catalyses the reaction 5-methyltetrahydropteroyltri-L-glutamate + L-homocysteine = tetrahydropteroyltri-L-glutamate + L-methionine. It participates in amino-acid biosynthesis; L-methionine biosynthesis via de novo pathway; L-methionine from L-homocysteine (MetE route): step 1/1. Catalyzes the transfer of a methyl group from 5-methyltetrahydrofolate to homocysteine resulting in methionine formation. This is 5-methyltetrahydropteroyltriglutamate--homocysteine methyltransferase from Burkholderia pseudomallei (strain K96243).